The sequence spans 351 residues: tRNA-specific 2-thiouridylase MnmA 2 (351 aa).

Residues 13–20 (GMSGGTDS) and phenylalanine 39 contribute to the ATP site. Cysteine 98 serves as the catalytic Nucleophile. Cysteine 98 and cysteine 195 are disulfide-bonded. Glycine 122 lines the ATP pocket. Positions 144–146 (KDQ) are interaction with tRNA. Catalysis depends on cysteine 195, which acts as the Cysteine persulfide intermediate. The interaction with tRNA stretch occupies residues 301 to 302 (RY).

The protein belongs to the MnmA/TRMU family.

Its subcellular location is the cytoplasm. The catalysed reaction is S-sulfanyl-L-cysteinyl-[protein] + uridine(34) in tRNA + AH2 + ATP = 2-thiouridine(34) in tRNA + L-cysteinyl-[protein] + A + AMP + diphosphate + H(+). Catalyzes the 2-thiolation of uridine at the wobble position (U34) of tRNA, leading to the formation of s(2)U34. The chain is tRNA-specific 2-thiouridylase MnmA 2 from Phocaeicola vulgatus (strain ATCC 8482 / DSM 1447 / JCM 5826 / CCUG 4940 / NBRC 14291 / NCTC 11154) (Bacteroides vulgatus).